The chain runs to 160 residues: Large ribosomal subunit protein eL29 (160 aa).

Residues 1–26 (MAKSKNHTTHNQSRKWHRNGIKKPRS) show a composition bias toward basic residues. Disordered stretches follow at residues 1–34 (MAKS…SLKG) and 115–160 (RLCQ…VKAP). K5 carries the N6-methyllysine modification. Residue S31 is modified to Phosphoserine. Position 33 is an N6-acetyllysine (K33). Low complexity predominate over residues 126-160 (KAGAKAPAKAQASAPAQAPKGAQAPKGAQAPVKAP). Repeat copies occupy residues 127–134 (AGAKAPAK) and 135–142 (AQASAPAQ). The interval 127–142 (AGAKAPAKAQASAPAQ) is 2 X 8 AA tandem repeats of A-X-A-K-A-P-A-[KQ]. Residue S138 is modified to Phosphoserine. K145 is modified (N6-acetyllysine).

The protein belongs to the eukaryotic ribosomal protein eL29 family. As to quaternary structure, component of the large ribosomal subunit.

The protein resides in the cytoplasm. Its function is as follows. Component of the large ribosomal subunit. The ribosome is a large ribonucleoprotein complex responsible for the synthesis of proteins in the cell. In Mus musculus (Mouse), this protein is Large ribosomal subunit protein eL29 (Rpl29).